Consider the following 226-residue polypeptide: MRINEMALHEKPRERLITYGAKSLSNVELLAILLNTGRKGFSSIDIANELLKQQSTIRDLKKLSINDLLKIKGIGLYKAVILQAAFELGERINSTSTFDKVQITHPSDVASLMMSTMKDLEQEHFVVLLLNSKNIVTKQAWVYKGTLNSSIIHPREVFNIAIRESSNSIIVVHNHPSGDVTPSKEDITTTYRLKECGDILGINLLDHIIIGDNKFTSLVEAGYFDK.

In terms of domain architecture, MPN spans 102–224; the sequence is QITHPSDVAS…FTSLVEAGYF (123 aa). H173, H175, and D186 together coordinate Zn(2+). The JAMM motif signature appears at 173–186; that stretch reads HNHPSGDVTPSKED.

It belongs to the UPF0758 family.

The chain is UPF0758 protein SE_1336 from Staphylococcus epidermidis (strain ATCC 12228 / FDA PCI 1200).